Reading from the N-terminus, the 1021-residue chain is Sodium/potassium-transporting ATPase subunit alpha-1 (1021 aa).

Residues 1–5 constitute a propeptide that is removed on maturation; that stretch reads MGKGV. Residues 1 to 11 are compositionally biased toward basic and acidic residues; it reads MGKGVGRDKYE. Residues 1–36 form a disordered region; the sequence is MGKGVGRDKYEPAAVSEHGDKKKAKKERDMDELKKE. The Cytoplasmic portion of the chain corresponds to 6 to 85; it reads GRDKYEPAAV…NALTPPPTTP (80 aa). Residue lysine 9 is modified to N6-acetyllysine. A Phosphotyrosine modification is found at tyrosine 10. Phosphoserine; by PKC is present on serine 16. At lysine 21 the chain carries N6-acetyllysine. Residues 26–36 show a composition bias toward basic and acidic residues; the sequence is KERDMDELKKE. Phosphoserine occurs at positions 38 and 45. Positions 80–82 are phosphoinositide-3 kinase binding; the sequence is PPP. A helical transmembrane segment spans residues 86-106; it reads EWVKFCRQLFGGFSMLLWIGA. The Extracellular segment spans residues 107–129; that stretch reads VLCFLAYGIQAATEEEPQNDNLY. The helical transmembrane segment at 130-150 threads the bilayer; the sequence is LGVVLSAVVIITGCFSYYQEA. Over 151 to 286 the chain is Cytoplasmic; sequence KSSKIMESFK…GGQTPIAAEI (136 aa). Serine 226 is subject to Phosphoserine. A Phosphotyrosine modification is found at tyrosine 258. The helical transmembrane segment at 287-306 threads the bilayer; sequence EHFIHIITGVAVFLGVSFFI. Topologically, residues 307 to 318 are extracellular; that stretch reads LSLILEYTWLEA. Residues 319–336 traverse the membrane as a helical segment; the sequence is VIFLIGIIVANVPEGLLA. The Cytoplasmic portion of the chain corresponds to 337–770; the sequence is TVTVCLTLTA…EEGRLIFDNL (434 aa). Residue aspartate 374 is the 4-aspartylphosphate intermediate of the active site. Phosphoserine occurs at positions 450 and 482. Lysine 485 serves as a coordination point for ATP. Position 540 is a phosphotyrosine (tyrosine 540). The segment at 594 to 715 is mediates interaction with SCN7A; it reads RAAVPDAVGK…QGAIVAVTGD (122 aa). Phosphoserine is present on serine 666. The Mg(2+) site is built by aspartate 715 and aspartate 719. A helical membrane pass occupies residues 771 to 790; it reads KKSIAYTLTSNIPEITPFLI. At 791-800 the chain is on the extracellular side; sequence FIIANIPLPL. The chain crosses the membrane as a helical span at residues 801–821; it reads GTVTILCIDLGTDMVPAISLA. The Cytoplasmic segment spans residues 822–841; the sequence is YEQAESDIMKRQPRNPQTDK. A helical transmembrane segment spans residues 842–864; it reads LVNERLISMAYGQIGMIQALGGF. Residues 865 to 916 are Extracellular-facing; sequence FTYFVIMAENGFLPNHLLGIRVTWDDRWINDVEDSYGQQWTYEQRKIVEFTC. Residues 917–936 traverse the membrane as a helical segment; sequence HTAFFVSIVVVQWADLVICK. Topologically, residues 937–949 are cytoplasmic; the sequence is TRRNSVFQQGMKN. Serine 941 carries the phosphoserine; by PKA modification. A helical membrane pass occupies residues 950–968; the sequence is KILIFGLFEETALAAFLSY. Topologically, residues 969–983 are extracellular; the sequence is CPGMGVALRMYPLKP. Residues 984–1004 form a helical membrane-spanning segment; that stretch reads TWWFCAFPYSLLIFVYDEVRK. Topologically, residues 1005–1021 are cytoplasmic; sequence LIIRRRPGGWVEKETYY.

This sequence belongs to the cation transport ATPase (P-type) (TC 3.A.3) family. Type IIC subfamily. In terms of assembly, the sodium/potassium-transporting ATPase is composed of a catalytic alpha subunit, an auxiliary non-catalytic beta subunit and an additional regulatory subunit. Interacts with regulatory subunit FXYD1. Interacts with regulatory subunit FXYD3. Interacts with SIK1. Interacts with SLC35G1 and STIM1. Interacts with CLN3; this interaction regulates the sodium/potassium-transporting ATPase complex localization at the plasma membrane. Interacts with SCN7A; activates ATP1A1 P-type sodium:potassium-exchanging transporter activity which indirectly signals to nearby neurons to regulate sodium homeostasis. In terms of processing, phosphorylation on Tyr-10 modulates pumping activity. Phosphorylation of Ser-941 by PKA modulates the response of ATP1A1 to PKC. Dephosphorylation by protein phosphatase 2A (PP2A) following increases in intracellular sodium, leading to increase catalytic activity.

The protein localises to the cell membrane. It is found in the basolateral cell membrane. Its subcellular location is the sarcolemma. It localises to the cell projection. The protein resides in the axon. The protein localises to the melanosome. The catalysed reaction is K(+)(out) + Na(+)(in) + ATP + H2O = K(+)(in) + Na(+)(out) + ADP + phosphate + H(+). With respect to regulation, specifically inhibited by cardiac glycosides such as digoxin or ouabain. Its function is as follows. This is the catalytic component of the active enzyme, which catalyzes the hydrolysis of ATP coupled with the exchange of sodium and potassium ions across the plasma membrane. This action creates the electrochemical gradient of sodium and potassium ions, providing the energy for active transport of various nutrients. Could also be part of an osmosensory signaling pathway that senses body-fluid sodium levels and controls salt intake behavior as well as voluntary water intake to regulate sodium homeostasis. In Ovis aries (Sheep), this protein is Sodium/potassium-transporting ATPase subunit alpha-1 (ATP1A1).